We begin with the raw amino-acid sequence, 163 residues long: Small ribosomal subunit protein uS9 (163 aa).

Low complexity predominate over residues 1–25 (MAENTNNSAVTETEETTAAFTTETN). Residues 1-40 (MAENTNNSAVTETEETTAAFTTETNSGAGTGTSTIAPGYG) form a disordered region.

The protein belongs to the universal ribosomal protein uS9 family.

In Bifidobacterium animalis subsp. lactis (strain AD011), this protein is Small ribosomal subunit protein uS9.